Reading from the N-terminus, the 76-residue chain is Small ribosomal subunit protein eS17 (76 aa).

This sequence belongs to the eukaryotic ribosomal protein eS17 family.

In Picrophilus torridus (strain ATCC 700027 / DSM 9790 / JCM 10055 / NBRC 100828 / KAW 2/3), this protein is Small ribosomal subunit protein eS17.